A 504-amino-acid polypeptide reads, in one-letter code: ATP-dependent RNA helicase DBP3 (504 aa).

Residues 1 to 14 (MSKDELKDKKRKVE) show a composition bias toward basic and acidic residues. The segment at 1 to 65 (MSKDELKDKK…KSETESFAAS (65 aa)) is disordered. Residues 20–53 (SKKKLKKDKKDKKDKKDKKDKKDKKEKKEKKEKK) show a composition bias toward basic residues. The Q motif signature appears at 94–120 (LDFSQVSFIDQIQKEISKFPKPTPIQA). One can recognise a Helicase ATP-binding domain in the interval 123 to 296 (WPYLLAGKDV…SSFMSEPVKV (174 aa)). 136–143 (AETGSGKT) serves as a coordination point for ATP. Residues 243–246 (DEAD) carry the DEAD box motif. A Helicase C-terminal domain is found at 325 to 474 (KLLELLKKYH…PVPEELKKFG (150 aa)).

This sequence belongs to the DEAD box helicase family. DDX5/DBP2 subfamily.

The protein localises to the nucleus. The protein resides in the nucleolus. It catalyses the reaction ATP + H2O = ADP + phosphate + H(+). In terms of biological role, ATP-dependent RNA helicase required for 60S ribosomal subunit synthesis. Involved in efficient pre-rRNA processing, predominantly at site A3, which is necessary for the normal formation of 25S and 5.8S rRNAs. The protein is ATP-dependent RNA helicase DBP3 (DBP3) of Kluyveromyces lactis (strain ATCC 8585 / CBS 2359 / DSM 70799 / NBRC 1267 / NRRL Y-1140 / WM37) (Yeast).